The sequence spans 592 residues: Aspartate--tRNA(Asp/Asn) ligase (592 aa).

Glu-171 is an L-aspartate binding site. The segment at 195-198 (QLFK) is aspartate. Residue Arg-217 coordinates L-aspartate. ATP is bound by residues 217-219 (RDE) and Gln-226. His-447 contacts L-aspartate. Glu-481 serves as a coordination point for ATP. Arg-488 is an L-aspartate binding site. 533-536 (GLDR) is a binding site for ATP.

It belongs to the class-II aminoacyl-tRNA synthetase family. Type 1 subfamily. In terms of assembly, homodimer.

It is found in the cytoplasm. It catalyses the reaction tRNA(Asx) + L-aspartate + ATP = L-aspartyl-tRNA(Asx) + AMP + diphosphate. Functionally, aspartyl-tRNA synthetase with relaxed tRNA specificity since it is able to aspartylate not only its cognate tRNA(Asp) but also tRNA(Asn). Reaction proceeds in two steps: L-aspartate is first activated by ATP to form Asp-AMP and then transferred to the acceptor end of tRNA(Asp/Asn). This Psychromonas ingrahamii (strain DSM 17664 / CCUG 51855 / 37) protein is Aspartate--tRNA(Asp/Asn) ligase.